A 159-amino-acid chain; its full sequence is Ribosomal RNA large subunit methyltransferase H (159 aa).

Leucine 76 and glycine 108 together coordinate S-adenosyl-L-methionine.

Belongs to the RNA methyltransferase RlmH family. Homodimer.

The protein resides in the cytoplasm. It catalyses the reaction pseudouridine(1915) in 23S rRNA + S-adenosyl-L-methionine = N(3)-methylpseudouridine(1915) in 23S rRNA + S-adenosyl-L-homocysteine + H(+). Specifically methylates the pseudouridine at position 1915 (m3Psi1915) in 23S rRNA. This is Ribosomal RNA large subunit methyltransferase H from Limosilactobacillus reuteri (strain DSM 20016) (Lactobacillus reuteri).